Here is a 119-residue protein sequence, read N- to C-terminus: MIKKETVLDVADNSGARKVLCIGISGSKKTASIGDVITVSVKKCIPVGKVSAGSIHRAVVVRVKKRSSSSIVVFGDNAVVLLNKQNEMIGTRVFGPTDSLLRRNKGFAKISSLSQEVFQ.

Belongs to the universal ribosomal protein uL14 family. As to quaternary structure, part of the 50S ribosomal subunit. Forms a cluster with proteins L3 and L19. In the 70S ribosome, L14 and L19 interact and together make contacts with the 16S rRNA in bridges B5 and B8.

In terms of biological role, binds to 23S rRNA. Forms part of two intersubunit bridges in the 70S ribosome. The protein is Large ribosomal subunit protein uL14 of Neorickettsia sennetsu (strain ATCC VR-367 / Miyayama) (Ehrlichia sennetsu).